The following is a 618-amino-acid chain: Proline--tRNA ligase (618 aa).

The protein belongs to the class-II aminoacyl-tRNA synthetase family. ProS type 1 subfamily. In terms of assembly, homodimer.

The protein resides in the cytoplasm. It catalyses the reaction tRNA(Pro) + L-proline + ATP = L-prolyl-tRNA(Pro) + AMP + diphosphate. Its function is as follows. Catalyzes the attachment of proline to tRNA(Pro) in a two-step reaction: proline is first activated by ATP to form Pro-AMP and then transferred to the acceptor end of tRNA(Pro). As ProRS can inadvertently accommodate and process non-cognate amino acids such as alanine and cysteine, to avoid such errors it has two additional distinct editing activities against alanine. One activity is designated as 'pretransfer' editing and involves the tRNA(Pro)-independent hydrolysis of activated Ala-AMP. The other activity is designated 'posttransfer' editing and involves deacylation of mischarged Ala-tRNA(Pro). The misacylated Cys-tRNA(Pro) is not edited by ProRS. This Streptococcus uberis (strain ATCC BAA-854 / 0140J) protein is Proline--tRNA ligase.